A 751-amino-acid chain; its full sequence is Dachshund homolog 1 (751 aa).

The interval 1-178 (MAVPAALIPP…PSPVENTPQN (178 aa)) is disordered. Low complexity-rich tracts occupy residues 20 to 53 (ISTS…SGPT) and 61 to 74 (ASSA…TVTS). Gly residues-rich tracts occupy residues 75–97 (PGGG…GGGS) and 107–119 (SSGG…GGGA). Residues 120-156 (SSTPITASTGSSSSSSSSSSSSSSSSSSSSSSSSSSS) are compositionally biased toward low complexity. Residues 167 to 178 (STPSPVENTPQN) are compositionally biased toward polar residues. The DACHbox-N stretch occupies residues 182–268 (KMVDLRGAKV…LISRKDFETL (87 aa)). The interval 182–377 (KMVDLRGAKV…VGSSGGSWDK (196 aa)) is interaction with SIX6 and HDAC3. 4 disordered regions span residues 273-295 (TNAS…PENS), 351-393 (SNNQ…APVA), 467-525 (SPPS…RIPV), and 537-556 (MGLS…AGHD). 2 stretches are compositionally biased toward polar residues: residues 285–294 (RTQSVTSPEN) and 351–369 (SNNQ…SSVG). Residue serine 484 is modified to Phosphoserine. Over residues 499–517 (SHPSSHRSSSVSSSPARTE) the composition is skewed to low complexity. The segment at 609–689 (SSIETLLTNI…KAKRKLQEAL (81 aa)) is DACHbox-C. The interval 620-699 (GLLKVAIDNA…EFETKRREQA (80 aa)) is interaction with SIN3A. The stretch at 623 to 711 (KVAIDNARAQ…TLKQAASADS (89 aa)) forms a coiled coil.

The protein belongs to the DACH/dachshund family. Interacts with SIX1, SIX6 and EYA3. Interacts with NCOR1 and HDAC3 through its N-terminus. Interacts with SIN3A through its C-terminus. Interacts with SMAD3 and SMAD4. Expressed at higher levels in adult kidney and lung, and at lower levels in brain and testis. Expressed in embryonal kidneys, eyes, cochleae and limb buds.

Its subcellular location is the nucleus. Transcription factor that is involved in regulation of organogenesis. Seems to be a regulator of SIX1, SIX6 and probably SIX5. Corepression of precursor cell proliferation in myoblasts by SIX1 is switched to coactivation through recruitment of EYA3 to the SIX1-DACH1 complex. Transcriptional activation also seems to involve association of CREBBP. Seems to act as a corepressor of SIX6 in regulating proliferation by directly repressing cyclin-dependent kinase inhibitors, including the p27Kip1 promoter. Inhibits TGF-beta signaling through interaction with SMAD4 and NCOR1. Binds to chromatin DNA via its DACHbox-N domain. The sequence is that of Dachshund homolog 1 (Dach1) from Mus musculus (Mouse).